Consider the following 185-residue polypeptide: Threonylcarbamoyl-AMP synthase (185 aa).

The YrdC-like domain occupies 4-185 (SFRVQQAARE…LATGEVVRPG (182 aa)).

This sequence belongs to the SUA5 family. TsaC subfamily.

It is found in the cytoplasm. The catalysed reaction is L-threonine + hydrogencarbonate + ATP = L-threonylcarbamoyladenylate + diphosphate + H2O. Functionally, required for the formation of a threonylcarbamoyl group on adenosine at position 37 (t(6)A37) in tRNAs that read codons beginning with adenine. Catalyzes the conversion of L-threonine, HCO(3)(-)/CO(2) and ATP to give threonylcarbamoyl-AMP (TC-AMP) as the acyladenylate intermediate, with the release of diphosphate. The polypeptide is Threonylcarbamoyl-AMP synthase (Pseudomonas putida (strain ATCC 700007 / DSM 6899 / JCM 31910 / BCRC 17059 / LMG 24140 / F1)).